Here is an 869-residue protein sequence, read N- to C-terminus: Dynamin-3 (869 aa).

The 267-residue stretch at 28 to 294 (LLELPQIAVV…LTNHIRDTLP (267 aa)) folds into the Dynamin-type G domain. The G1 motif stretch occupies residues 38-45 (GGQSAGKS). Residue 38–46 (GGQSAGKSS) participates in GTP binding. Residues 64–66 (VTR) are G2 motif. The interval 136-139 (DLPG) is G3 motif. Positions 205–208 (TKLD) are G4 motif. Residue 205–211 (TKLDLMD) participates in GTP binding. Tyrosine 231 carries the post-translational modification Phosphotyrosine. Positions 235–238 (VNRS) are G5 motif. Residue 236 to 239 (NRSQ) participates in GTP binding. Residue lysine 299 is modified to N6-acetyllysine. A PH domain is found at 525 to 631 (IVIRKGWLTV…WKASLLRAGV (107 aa)). Tyrosine 603 is modified (phosphotyrosine). Position 604 is an N6-acetyllysine (lysine 604). One can recognise a GED domain in the interval 659–750 (VETIRNLVDS…IIGDINTVTV (92 aa)). Residues 752–869 (TPAPPPVDDS…IRPLESSLLD (118 aa)) form a disordered region. Phosphoserine is present on residues serine 769 and serine 773. The segment covering 775–796 (TTQRRLTLSAPLPRPASSRGPA) has biased composition (low complexity). Composition is skewed to pro residues over residues 797–822 (PAIPSPGPHSGAPPVPFRPGPLPPFP) and 832–855 (PQVPSRPTRAPPSVPSRRPPPSPT). Residue serine 853 is modified to Phosphoserine.

It belongs to the TRAFAC class dynamin-like GTPase superfamily. Dynamin/Fzo/YdjA family. Isoform-specific expression in germ-cell-depleted testis (Sertoli cells), brain (peripheral sensory neurons), lung and heart.

The protein resides in the cytoplasm. The protein localises to the cytoskeleton. Its subcellular location is the cytoplasmic vesicle. It is found in the golgi apparatus. The catalysed reaction is GTP + H2O = GDP + phosphate + H(+). Its function is as follows. Microtubule-associated force-producing protein involved in producing microtubule bundles and able to bind and hydrolyze GTP. Most probably involved in vesicular trafficking processes, in particular endocytosis. The polypeptide is Dynamin-3 (Dnm3) (Rattus norvegicus (Rat)).